A 124-amino-acid chain; its full sequence is Fluoride-specific ion channel FluC (124 aa).

Helical transmembrane passes span 4-24 (FLAV…LGLW), 34-54 (LGTL…LAWF), 67-87 (FVIT…AEVV), and 100-120 (LIAF…FYSL). Na(+) contacts are provided by glycine 74 and threonine 77.

The protein belongs to the fluoride channel Fluc/FEX (TC 1.A.43) family.

It is found in the cell inner membrane. It catalyses the reaction fluoride(in) = fluoride(out). Na(+) is not transported, but it plays an essential structural role and its presence is essential for fluoride channel function. Functionally, fluoride-specific ion channel. Important for reducing fluoride concentration in the cell, thus reducing its toxicity. The polypeptide is Fluoride-specific ion channel FluC (Thiobacillus denitrificans (strain ATCC 25259 / T1)).